A 425-amino-acid polypeptide reads, in one-letter code: ATP-dependent RNA helicase eIF4A (425 aa).

Residues 38 to 66 (DTWEDYGLKEDLLKGIYSIGFETPSFIQK) carry the Q motif motif. Residues 69-241 (IQPIIDGRDI…EEILINPVII (173 aa)) enclose the Helicase ATP-binding domain. 82 to 89 (AQSGTGKT) lines the ATP pocket. Residues 187-190 (DEAD) carry the DEAD box motif. A Helicase C-terminal domain is found at 252–425 (GIRQYFIDLR…KELPADFSFQ (174 aa)).

The protein belongs to the DEAD box helicase family. eIF4A subfamily. Component of the eIF4F complex, which composition varies with external and internal environmental conditions. It is composed of at least eIF4A, eIF4E and eIF4G.

It localises to the cytoplasm. The enzyme catalyses ATP + H2O = ADP + phosphate + H(+). Its function is as follows. ATP-dependent RNA helicase which is a subunit of the eIF4F complex involved in cap recognition and is required for mRNA binding to ribosome. In the current model of translation initiation, eIF4A unwinds RNA secondary structures in the 5'-UTR of mRNAs which is necessary to allow efficient binding of the small ribosomal subunit, and subsequent scanning for the initiator codon. The protein is ATP-dependent RNA helicase eIF4A (TIF1) of Encephalitozoon cuniculi (strain GB-M1) (Microsporidian parasite).